The sequence spans 180 residues: NADH-quinone oxidoreductase subunit I (180 aa).

4Fe-4S ferredoxin-type domains lie at 50-80 (LTRD…LQKA) and 90-119 (EFFR…LTPD). Residues cysteine 60, cysteine 63, cysteine 66, cysteine 70, cysteine 99, cysteine 102, cysteine 105, and cysteine 109 each contribute to the [4Fe-4S] cluster site.

The protein belongs to the complex I 23 kDa subunit family. As to quaternary structure, NDH-1 is composed of 14 different subunits. Subunits NuoA, H, J, K, L, M, N constitute the membrane sector of the complex. The cofactor is [4Fe-4S] cluster.

Its subcellular location is the cell inner membrane. The catalysed reaction is a quinone + NADH + 5 H(+)(in) = a quinol + NAD(+) + 4 H(+)(out). NDH-1 shuttles electrons from NADH, via FMN and iron-sulfur (Fe-S) centers, to quinones in the respiratory chain. The immediate electron acceptor for the enzyme in this species is believed to be ubiquinone. Couples the redox reaction to proton translocation (for every two electrons transferred, four hydrogen ions are translocated across the cytoplasmic membrane), and thus conserves the redox energy in a proton gradient. This Acinetobacter baumannii (strain ACICU) protein is NADH-quinone oxidoreductase subunit I.